The chain runs to 455 residues: Major facilitator superfamily domain-containing protein 10 (455 aa).

11 helical membrane-spanning segments follow: residues 27-47 (VVFL…PLLP), 86-106 (VLFG…CAPL), 113-135 (CLGR…AVWA), 148-168 (LIGG…ADLG), 176-196 (GMAV…MLGA), 202-222 (MAPW…FCFL), 275-295 (LGLV…TLSF), 310-327 (KMFF…GAYA), 336-356 (VAAV…IGWG), 359-379 (LPVL…VVPC), and 421-441 (LAGA…PFFL).

This sequence belongs to the major facilitator superfamily. As to expression, expressed in luminal membrane of renal tubules (at protein level). Detected in all tissues tested with higher expression in heart, splee, kidney, leukocytes and prostate.

It localises to the nucleus inner membrane. The protein localises to the cell membrane. Its function is as follows. Probable organic anion transporter which may serve as a transporter for some non-steroidal anti-inflammatory drugs (NSAIDs) as well as other organic anions across the luminal membranes of renal proximal tubules at the final excretion step into the urine. The sequence is that of Major facilitator superfamily domain-containing protein 10 (MFSD10) from Homo sapiens (Human).